We begin with the raw amino-acid sequence, 629 residues long: tRNA uridine 5-carboxymethylaminomethyl modification enzyme MnmG (629 aa).

Residues 13–18 (GGGHAG), valine 125, and serine 180 each bind FAD. Position 273-287 (273-287 (GPRYCPSIEDKVMRF)) interacts with NAD(+). Glutamine 370 is a binding site for FAD.

It belongs to the MnmG family. Homodimer. Heterotetramer of two MnmE and two MnmG subunits. FAD is required as a cofactor.

It localises to the cytoplasm. NAD-binding protein involved in the addition of a carboxymethylaminomethyl (cmnm) group at the wobble position (U34) of certain tRNAs, forming tRNA-cmnm(5)s(2)U34. This Salmonella typhi protein is tRNA uridine 5-carboxymethylaminomethyl modification enzyme MnmG.